The primary structure comprises 174 residues: MNRDNKQELVTQMHERLSRAKAVFLADFRGMAVGQATSLRNELRGASVEYKVFKNTLLDLAAKGTDVECISPYLAGPTAIAISYDDPVSAAKVLSKFAKDPAGKFVLKAGVLSGKLLDVTQIQALADLPSREVLIAKMLGSMQAPATNFVGVLAALPGSLVRVLDAIRAQKADN.

The protein belongs to the universal ribosomal protein uL10 family. In terms of assembly, part of the ribosomal stalk of the 50S ribosomal subunit. The N-terminus interacts with L11 and the large rRNA to form the base of the stalk. The C-terminus forms an elongated spine to which L12 dimers bind in a sequential fashion forming a multimeric L10(L12)X complex.

Functionally, forms part of the ribosomal stalk, playing a central role in the interaction of the ribosome with GTP-bound translation factors. The sequence is that of Large ribosomal subunit protein uL10 from Pelobacter propionicus (strain DSM 2379 / NBRC 103807 / OttBd1).